Consider the following 228-residue polypeptide: 2,3-bisphosphoglycerate-dependent phosphoglycerate mutase (228 aa).

Residues 8 to 15, 21 to 22, Arg60, 87 to 90, Lys98, 114 to 115, and 183 to 184 contribute to the substrate site; these read RHGQSVWN, TG, ERHY, RR, and GN. His9 acts as the Tele-phosphohistidine intermediate in catalysis. The active-site Proton donor/acceptor is the Glu87.

The protein belongs to the phosphoglycerate mutase family. BPG-dependent PGAM subfamily. In terms of assembly, homodimer.

The catalysed reaction is (2R)-2-phosphoglycerate = (2R)-3-phosphoglycerate. It functions in the pathway carbohydrate degradation; glycolysis; pyruvate from D-glyceraldehyde 3-phosphate: step 3/5. Its function is as follows. Catalyzes the interconversion of 2-phosphoglycerate and 3-phosphoglycerate. The chain is 2,3-bisphosphoglycerate-dependent phosphoglycerate mutase from Rhodospirillum centenum (strain ATCC 51521 / SW).